The following is a 370-amino-acid chain: Small ribosomal subunit biogenesis GTPase RsgA 1 (370 aa).

Residues 97-255 form the CP-type G domain; sequence QTQLDRPPIA…LADTPGFNQP (159 aa). GTP is bound by residues 146 to 149 and 197 to 205; these read NKSD and GPSGVGKSS. 4 residues coordinate Zn(2+): Cys280, Cys285, His287, and Cys293. The interval 325–370 is disordered; that stretch reads PESTLKLKTKGKGQSQYEPKLESKKYRRTSRRTQVQGLQDLYQEEE.

It belongs to the TRAFAC class YlqF/YawG GTPase family. RsgA subfamily. Monomer. Associates with 30S ribosomal subunit, binds 16S rRNA. Zn(2+) serves as cofactor.

It is found in the cytoplasm. One of several proteins that assist in the late maturation steps of the functional core of the 30S ribosomal subunit. Helps release RbfA from mature subunits. May play a role in the assembly of ribosomal proteins into the subunit. Circularly permuted GTPase that catalyzes slow GTP hydrolysis, GTPase activity is stimulated by the 30S ribosomal subunit. The chain is Small ribosomal subunit biogenesis GTPase RsgA 1 from Nostoc sp. (strain PCC 7120 / SAG 25.82 / UTEX 2576).